The primary structure comprises 1585 residues: Histone acetyltransferase lsy-12 (1585 aa).

Disordered stretches follow at residues 1–37 (MGKK…ARRE) and 279–491 (GPQH…DDPV). Residues 23–37 (PKDRTARPTAAARRE) are compositionally biased toward basic and acidic residues. Over residues 279-296 (GPQHENVTVSENVLSTES) the composition is skewed to polar residues. The segment covering 302 to 312 (TETKRLHDSSR) has biased composition (basic and acidic residues). Polar residues-rich tracts occupy residues 355–364 (LLSNPHSTPV) and 411–426 (SRLS…SNDL). Residues 431–440 (SAPSSSSAAS) show a composition bias toward low complexity. Over residues 453-469 (QQRRKGNQSAARSRKIK) the composition is skewed to basic residues. Over residues 477 to 491 (QEDEPMELDSDDDPV) the composition is skewed to acidic residues. The MYST-type HAT domain occupies 544–830 (EQARLPERIH…YDPECLDWVP (287 aa)). Residues 577–602 (LFICEFCFFYARSDEIMQNHAKKCML) form a C2HC MYST-type zinc finger. At K644 the chain carries N6-acetyllysine; by autocatalysis. 685-689 (SCIMT) lines the acetyl-CoA pocket. E720 acts as the Proton donor/acceptor in catalysis. 2 residues coordinate acetyl-CoA: S724 and K815. Basic and acidic residues-rich tracts occupy residues 844–855 (SKEEIEQDEQRR) and 947–956 (VLDKSNIREE). 4 disordered regions span residues 844 to 903 (SKEE…LKHE), 927 to 1262 (EENK…IGKS), 1286 to 1373 (ESTA…ASNH), and 1431 to 1507 (HHQF…VHPQ). Positions 977–999 (NKCNNTESEPNPSGRKTSATSSG) are enriched in polar residues. The span at 1011-1022 (TEEEEEDDDPTD) shows a compositional bias: acidic residues. Residues 1029–1046 (DDEKPFETSVNKEKNEKS) show a composition bias toward basic and acidic residues. Positions 1047 to 1060 (RRGKKVSKKRRSVA) are enriched in basic residues. Composition is skewed to basic and acidic residues over residues 1070–1081 (VRDRDEPKKAEN) and 1135–1151 (DIPK…AYDR). Residues 1164-1173 (PTPDSYHSSP) are compositionally biased toward low complexity. The segment covering 1185 to 1194 (LMQAQQNIYQ) has biased composition (polar residues). Residues 1196 to 1207 (NDCHFAENDSKP) are compositionally biased toward basic and acidic residues. Composition is skewed to polar residues over residues 1298–1317 (AGPS…NTTP) and 1324–1333 (HPNSQQQATP). Over residues 1482 to 1493 (QHQQQQPQQPQQ) the composition is skewed to low complexity.

The protein belongs to the MYST (SAS/MOZ) family.

The catalysed reaction is L-lysyl-[protein] + acetyl-CoA = N(6)-acetyl-L-lysyl-[protein] + CoA + H(+). Its function is as follows. Probable histone acetyltransferase. Required to initiate and then maintain lateralized gene expression in the ASE sensory neurons. Involved in determining cell fate in the ASE neurons. This Caenorhabditis elegans protein is Histone acetyltransferase lsy-12.